Reading from the N-terminus, the 218-residue chain is Adenylate kinase (218 aa).

10-15 (GAGKGT) contributes to the ATP binding site. Residues 30–59 (STGDMLRAAVKEETPLGRKAKEVMDSGNLV) form an NMP region. Residues T31, R36, 57 to 59 (NLV), 85 to 88 (GFPR), and Q92 contribute to the AMP site. The LID stretch occupies residues 122 to 159 (GRRVHPASGRTYHLTFNPPQQQGVDDETGEPLIQRVDD). ATP-binding positions include R123 and 132-133 (TY). AMP contacts are provided by R156 and R167. G203 contributes to the ATP binding site.

The protein belongs to the adenylate kinase family. Monomer.

It localises to the cytoplasm. It catalyses the reaction AMP + ATP = 2 ADP. It functions in the pathway purine metabolism; AMP biosynthesis via salvage pathway; AMP from ADP: step 1/1. Its function is as follows. Catalyzes the reversible transfer of the terminal phosphate group between ATP and AMP. Plays an important role in cellular energy homeostasis and in adenine nucleotide metabolism. The protein is Adenylate kinase of Chlorobium phaeovibrioides (strain DSM 265 / 1930) (Prosthecochloris vibrioformis (strain DSM 265)).